A 2032-amino-acid polypeptide reads, in one-letter code: Cytoskeleton-associated protein 5 (2032 aa).

3 TOG regions span residues 1–223, 268–502, and 588–817; these read MGDD…KLPT, YELL…LVHG, and SIEV…GQSP. At lysine 48 the chain carries N6-acetyllysine. HEAT repeat units follow at residues 159-197, 356-394, and 434-472; these read IISL…WNRD, GQYA…TTTL, and KSLL…VVGE. Residues 501-579 are disordered; the sequence is HGKKSGLATE…GTKNKKGLET (79 aa). The HEAT 4 repeat unit spans residues 750-788; sequence ELNVKAFISNVKTALAATNPAVRTSAITLLGVMYLYVGP. Positions 811–848 are disordered; that stretch reads KMQGQSPPAPTRGIAKHSTSATDEGEDGEEPGEGGNDV. Residue serine 816 is modified to Phosphoserine. The span at 833–842 shows a compositional bias: acidic residues; sequence DEGEDGEEPG. TOG regions lie at residues 853–1081 and 1193–1428; these read PRIE…ANMP and IEQL…KRPS. 3 HEAT repeats span residues 855 to 893, 936 to 974, and 1013 to 1051; these read IEIS…EAKF, RQHV…QTGM, and PTDL…HLGY. Low complexity predominate over residues 1078–1095; that stretch reads ANMPSKPAAPAKAMSKPM. Positions 1078–1156 are disordered; sequence ANMPSKPAAP…KTTLKEDDDK (79 aa). HEAT repeat units follow at residues 1284 to 1322, 1324 to 1357, and 1361 to 1399; these read ENEA…VYPA, KMFP…SYGM, and QPTP…VHGD. Residues 1420–1459 are disordered; the sequence is IKRSAKRPSAAPVKQAEEKPQRTQNINSNANMLRKGPAED. Positions 1441–1450 are enriched in polar residues; sequence RTQNINSNAN. At serine 1469 the chain carries Phosphoserine. The tract at residues 1801–1822 is disordered; the sequence is SMDQTGSKSDKETEKGASRIDE. Over residues 1808-1822 the composition is skewed to basic and acidic residues; the sequence is KSDKETEKGASRIDE. Phosphoserine is present on serine 1861. 2 disordered regions span residues 1893–1926 and 1948–2032; these read SKGR…GNTN and LDNT…SSRK. Low complexity predominate over residues 1909–1921; the sequence is VTCVPTPTSTVSS. Residues 1932-1957 are interaction with TACC3; the sequence is PSVYLERLKILRQRCGLDNTKQDDRP. A compositionally biased stretch (polar residues) spans 1972–1983; sequence ASSTDMLHSKLS. A compositionally biased stretch (basic and acidic residues) spans 1984–1997; sequence QLRESREQHQHSDL. Residues 2002–2015 are compositionally biased toward low complexity; the sequence is THSAGTMTSSSSTT. Over residues 2018-2032 the composition is skewed to basic and acidic residues; that stretch reads DDLKKRLERIKSSRK.

This sequence belongs to the TOG/XMAP215 family. As to quaternary structure, interacts with TACC1. Interacts with HNRNPA2B1. Interacts with TACC3 independently of clathrin. Interacts with TACC3 and clathrin forming the TACC3/ch-TOG/clathrin complex located at spindle inter-microtubules bridges. Interacts with NDC80; indicative for an association with the NDC80 complex. Interacts with SLAIN2. Interacts with SLAIN1.

Its subcellular location is the cytoplasm. The protein localises to the cytoskeleton. It is found in the microtubule organizing center. It localises to the centrosome. The protein resides in the spindle pole. Its subcellular location is the spindle. The protein localises to the chromosome. It is found in the centromere. It localises to the kinetochore. Binds to the plus end of microtubules and regulates microtubule dynamics and microtubule organization. Acts as a processive microtubule polymerase. Promotes cytoplasmic microtubule nucleation and elongation. Plays a major role in organizing spindle poles. In spindle formation protects kinetochore microtubules from depolymerization by KIF2C and has an essential role in centrosomal microtubule assembly independently of KIF2C activity. Contributes to centrosome integrity. Acts as a component of the TACC3/ch-TOG/clathrin complex proposed to contribute to stabilization of kinetochore fibers of the mitotic spindle by acting as inter-microtubule bridge. The TACC3/ch-TOG/clathrin complex is required for the maintenance of kinetochore fiber tension. Enhances the strength of NDC80 complex-mediated kinetochore-tip microtubule attachments. The sequence is that of Cytoskeleton-associated protein 5 from Mus musculus (Mouse).